A 528-amino-acid chain; its full sequence is Atypical kinase COQ8B, mitochondrial (528 aa).

Residues 93–109 (LASFGGLAVGLGLGALA) traverse the membrane as a helical segment. The KxGQ motif signature appears at 151 to 154 (KIGQ). The Protein kinase domain occupies 187–419 (MMKVLEEELG…DRVLQKSQDL (233 aa)). The AAAS motif signature appears at 212-215 (AAAS). Residues Ser-215, Lys-233, and 320–323 (MELA) each bind ATP. Residue Asp-363 is the Proton acceptor of the active site. ATP-binding residues include Asn-368 and Asp-382.

This sequence belongs to the protein kinase superfamily. ADCK protein kinase family. In terms of assembly, homodimer; homodimerizes via its transmembrane region. Interacts with COQ6 and COQ7. Interacts with the multi-subunit COQ enzyme complex, composed of at least COQ3, COQ4, COQ5, COQ6, COQ7 and COQ9. As to expression, in the kidney, expressed in glomeruli, predominantly in podocyte foot precesses, as well as in proximal tubules and collecting ducts (at protein level).

It is found in the mitochondrion membrane. Its subcellular location is the cytoplasm. The protein resides in the cytosol. It localises to the cell membrane. The protein operates within cofactor biosynthesis; ubiquinone biosynthesis. Functionally, atypical kinase involved in the biosynthesis of coenzyme Q, also named ubiquinone, an essential lipid-soluble electron transporter for aerobic cellular respiration. Its substrate specificity is still unclear: may act as a protein kinase that mediates phosphorylation of COQ3. According to other reports, acts as a small molecule kinase, possibly a lipid kinase that phosphorylates a prenyl lipid in the ubiquinone biosynthesis pathway, as suggested by its ability to bind coenzyme Q lipid intermediates. However, the small molecule kinase activity was not confirmed by another publication. Required for podocyte migration. In Rattus norvegicus (Rat), this protein is Atypical kinase COQ8B, mitochondrial.